A 329-amino-acid polypeptide reads, in one-letter code: PTS-dependent dihydroxyacetone kinase 1, dihydroxyacetone-binding subunit DhaK (329 aa).

Residues 7–329 (GTDQVVEQMV…LKLPVDTIAW (323 aa)) form the DhaK domain. Dihydroxyacetone is bound by residues 53 to 56 (GSGH), K104, and D109. The active-site Proton acceptor is the H56. Residue H218 is the Tele-hemiaminal-histidine intermediate of the active site.

In terms of assembly, homodimer. The dihydroxyacetone kinase complex is composed of a homodimer of DhaM, a homodimer of DhaK and the subunit DhaL.

Its subcellular location is the cytoplasm. The enzyme catalyses dihydroxyacetone + phosphoenolpyruvate = dihydroxyacetone phosphate + pyruvate. The protein operates within polyol metabolism; glycerol degradation. Its function is as follows. Dihydroxyacetone binding subunit of the dihydroxyacetone kinase, which is responsible for the phosphoenolpyruvate (PEP)-dependent phosphorylation of dihydroxyacetone via a phosphoryl group transfer from DhaL-ATP. The polypeptide is PTS-dependent dihydroxyacetone kinase 1, dihydroxyacetone-binding subunit DhaK (Listeria innocua serovar 6a (strain ATCC BAA-680 / CLIP 11262)).